The following is a 236-amino-acid chain: MGQKINPIGLRLGVNRTWDSRWYANTGEYGKLLHEDVKIREFLTEELKQAAISKIVIERPHKKCRVTIHSARPGIIIGKKGADIEKLRKKLSEMTNADTSLNIVEVRKPEVDATLIAQSIAQQLERRVAFRRAMKRAVQSAMRLGAEGIRINCSGRLGGAEIARMEWYREGRVPLHTLRADIDYGTAEAKTAYGICGVKVWVFKGEILEHDPMASERRAVEGDNQGSSSNRRRENA.

The region spanning 39–107 (IREFLTEELK…DTSLNIVEVR (69 aa)) is the KH type-2 domain. The segment at 214 to 236 (ASERRAVEGDNQGSSSNRRRENA) is disordered.

Belongs to the universal ribosomal protein uS3 family. Part of the 30S ribosomal subunit. Forms a tight complex with proteins S10 and S14.

Binds the lower part of the 30S subunit head. Binds mRNA in the 70S ribosome, positioning it for translation. The chain is Small ribosomal subunit protein uS3 from Brucella melitensis biotype 1 (strain ATCC 23456 / CCUG 17765 / NCTC 10094 / 16M).